Reading from the N-terminus, the 399-residue chain is Argininosuccinate synthase (399 aa).

Residues Ala-10–Ser-18 and Ala-38 each bind ATP. Tyr-89 contributes to the L-citrulline binding site. Residue Gly-119 participates in ATP binding. Residues Thr-121, Asn-125, and Asp-126 each coordinate L-aspartate. Asn-125 serves as a coordination point for L-citrulline. Residues Arg-129, Ser-177, Ser-186, Glu-262, and Tyr-274 each contribute to the L-citrulline site.

The protein belongs to the argininosuccinate synthase family. Type 1 subfamily. Homotetramer.

It localises to the cytoplasm. The enzyme catalyses L-citrulline + L-aspartate + ATP = 2-(N(omega)-L-arginino)succinate + AMP + diphosphate + H(+). Its pathway is amino-acid biosynthesis; L-arginine biosynthesis; L-arginine from L-ornithine and carbamoyl phosphate: step 2/3. The chain is Argininosuccinate synthase from Rippkaea orientalis (strain PCC 8801 / RF-1) (Cyanothece sp. (strain PCC 8801)).